A 478-amino-acid chain; its full sequence is Proline--tRNA ligase (478 aa).

This sequence belongs to the class-II aminoacyl-tRNA synthetase family. ProS type 3 subfamily. In terms of assembly, homodimer.

It localises to the cytoplasm. The catalysed reaction is tRNA(Pro) + L-proline + ATP = L-prolyl-tRNA(Pro) + AMP + diphosphate. Catalyzes the attachment of proline to tRNA(Pro) in a two-step reaction: proline is first activated by ATP to form Pro-AMP and then transferred to the acceptor end of tRNA(Pro). This Clostridium botulinum (strain Loch Maree / Type A3) protein is Proline--tRNA ligase.